The sequence spans 354 residues: Sulfate/thiosulfate import ATP-binding protein CysA 2 (354 aa).

Positions 3–237 constitute an ABC transporter domain; sequence IHIQQVNKHF…PSNPFVYEFL (235 aa). 35-42 lines the ATP pocket; the sequence is GPSGSGKT.

The protein belongs to the ABC transporter superfamily. Sulfate/tungstate importer (TC 3.A.1.6) family. The complex is composed of two ATP-binding proteins (CysA), two transmembrane proteins (CysT and CysW) and a solute-binding protein (CysP).

Its subcellular location is the cell inner membrane. It catalyses the reaction sulfate(out) + ATP + H2O = sulfate(in) + ADP + phosphate + H(+). It carries out the reaction thiosulfate(out) + ATP + H2O = thiosulfate(in) + ADP + phosphate + H(+). Part of the ABC transporter complex CysAWTP involved in sulfate/thiosulfate import. Responsible for energy coupling to the transport system. In Shewanella oneidensis (strain ATCC 700550 / JCM 31522 / CIP 106686 / LMG 19005 / NCIMB 14063 / MR-1), this protein is Sulfate/thiosulfate import ATP-binding protein CysA 2.